Reading from the N-terminus, the 304-residue chain is Sulfate adenylyltransferase subunit 2 (304 aa).

This sequence belongs to the PAPS reductase family. CysD subfamily. In terms of assembly, heterodimer composed of CysD, the smaller subunit, and CysN.

The enzyme catalyses sulfate + ATP + H(+) = adenosine 5'-phosphosulfate + diphosphate. Its pathway is sulfur metabolism; hydrogen sulfide biosynthesis; sulfite from sulfate: step 1/3. With CysN forms the ATP sulfurylase (ATPS) that catalyzes the adenylation of sulfate producing adenosine 5'-phosphosulfate (APS) and diphosphate, the first enzymatic step in sulfur assimilation pathway. APS synthesis involves the formation of a high-energy phosphoric-sulfuric acid anhydride bond driven by GTP hydrolysis by CysN coupled to ATP hydrolysis by CysD. This Acinetobacter baylyi (strain ATCC 33305 / BD413 / ADP1) protein is Sulfate adenylyltransferase subunit 2.